The primary structure comprises 2614 residues: Talin-B (2614 aa).

Residues 85-369 enclose the FERM domain; it reads RPLKVRLMDE…GYIEILMKKR (285 aa). Positions 393-421 are disordered; it reads RGQTSQATTSSSLSGYDGNGGREGQYSAP. A compositionally biased stretch (low complexity) spans 395 to 406; it reads QTSQATTSSSLS. 2 coiled-coil regions span residues 1938-1965 and 2033-2057; these read TQNI…ASGK and NKAI…LVQS. An I/LWEQ domain is found at 2219–2460; it reads LLFAAGESLE…SIRKKEYSDQ (242 aa). The tract at residues 2454-2557 is disordered; the sequence is KKEYSDQTGN…AAPTAAAPNK (104 aa). Residues 2473-2487 are compositionally biased toward polar residues; that stretch reads KPTTSISVGITPTKR. A compositionally biased stretch (low complexity) spans 2517–2537; the sequence is KKPAPSQAPSSPVAPVSAPVS. The segment covering 2538 to 2548 has biased composition (pro residues); that stretch reads KPSPKPAPKPA. In terms of domain architecture, HP spans 2553-2614; the sequence is AAPNKTYTLE…NNIKTKLGLF (62 aa).

It is found in the cytoplasm. Its subcellular location is the cytoskeleton. The protein resides in the cell cortex. Functionally, actin-binding protein required for multicellular morphogenesis. Substrate of pkgB and/or pkbA. The protein is Talin-B (talB) of Dictyostelium discoideum (Social amoeba).